A 545-amino-acid chain; its full sequence is Ubiquitin carboxyl-terminal hydrolase 17-like protein D (545 aa).

One can recognise a USP domain in the interval 51-348; sequence CGLQNTGNSC…NAYVLFYVQQ (298 aa). Residue C60 is the Nucleophile of the active site. Catalysis depends on H307, which acts as the Proton acceptor. 2 disordered regions span residues 367-443 and 521-545; these read LDPE…KLGQ and RQEG…LLVR. Residues 374 to 385 are compositionally biased toward basic residues; sequence KKSRRKKHKKKS. Positions 393–404 are enriched in basic and acidic residues; the sequence is EPSKNREKKATK. The span at 524–537 shows a compositional bias: basic residues; it reads GRRRSKKGKNKNKQ.

Belongs to the peptidase C19 family. USP17 subfamily. As to expression, detected in T-cell, myeloid, and embryonic stem cell lines.

It localises to the nucleus. Its subcellular location is the endoplasmic reticulum. The catalysed reaction is Thiol-dependent hydrolysis of ester, thioester, amide, peptide and isopeptide bonds formed by the C-terminal Gly of ubiquitin (a 76-residue protein attached to proteins as an intracellular targeting signal).. Functionally, deubiquitinating enzyme that removes conjugated ubiquitin from specific proteins to regulate different cellular processes that may include cell proliferation, progression through the cell cycle, apoptosis, cell migration, and the cellular response to viral infection. In Mus musculus (Mouse), this protein is Ubiquitin carboxyl-terminal hydrolase 17-like protein D.